The primary structure comprises 1324 residues: Mediator of RNA polymerase II transcription subunit 13 (1324 aa).

Disordered regions lie at residues 296–346 (ESGV…PPEA), 386–455 (FFDD…ATTA), 535–590 (GRFF…EPEI), 607–631 (HDDK…SNNS), 694–816 (KGGQ…VPSA), and 1151–1198 (TGSD…PDIY). A compositionally biased stretch (polar residues) spans 298–331 (GVNTNESTAAQPQPAQNGTNSMAPAAGTTNATTQ). Residues 398 to 407 (DGDNDNGNDN) show a composition bias toward acidic residues. Residues 408–442 (DNDKADAMDVDVKEEAKKEEMIKKETKEEVPVKEE) are compositionally biased toward basic and acidic residues. The span at 546 to 566 (DNEGSSDNTGDSSDSGDGSES) shows a compositional bias: low complexity. 2 stretches are compositionally biased toward basic and acidic residues: residues 567-578 (VPRDVKRQKVDE) and 607-617 (HDDKPAKKIDS). Low complexity-rich tracts occupy residues 618–631 (SNDT…SNNS) and 724–743 (SNAS…QMGA). A compositionally biased stretch (polar residues) spans 750–784 (LSPSRGATPQPEGSSPETRPSNWTPGITSQVNSAA). 2 stretches are compositionally biased toward low complexity: residues 785-816 (SSPV…VPSA) and 1172-1184 (TGAA…GSAP).

This sequence belongs to the Mediator complex subunit 13 family. In terms of assembly, component of the SRB8-11 complex, which itself associates with the Mediator complex.

Its subcellular location is the nucleus. Functionally, component of the SRB8-11 complex. The SRB8-11 complex is a regulatory module of the Mediator complex which is itself involved in regulation of basal and activated RNA polymerase II-dependent transcription. The SRB8-11 complex may be involved in the transcriptional repression of a subset of genes regulated by Mediator. It may inhibit the association of the Mediator complex with RNA polymerase II to form the holoenzyme complex. This is Mediator of RNA polymerase II transcription subunit 13 (SSN2) from Yarrowia lipolytica (strain CLIB 122 / E 150) (Yeast).